Consider the following 375-residue polypeptide: MTPIVFIDRDGTLIEEPPDFQIDAYEKLRLVNGVIPALLKLRDAGYHFVIVTNQDGLGSPTYPQASFDGPNALMLQIFSSQGIVFRDVLIDRSWPADNAPTRKPGIGLMVAYLQDRDIDWARSAMVGDRPTDLQFAENLNIRGFQLRTPQFGGDWDWDGIAHTLADAPRRAVVQRHTKETNIRVEIDLDGAPQARITTGLPFFDHMLEQIAKHAGISLHISAVGDLHIDEHHTIEDTGLALGQAVRQALGDKRGIGRYGFDPPQLPWQVSGAAAHGGFTLPMDETQASAVLDFSGRPYFVFEGTFVRERVGDMPTELVPHFFRSLCDASGMNLHLSVHGDNDHHKVEACFKALARALRQALQRHGHVLPSTKGAL.

Residues 1–168 (MTPIVFIDRD…GIAHTLADAP (168 aa)) are histidinol-phosphatase. D8 (nucleophile) is an active-site residue. The Mg(2+) site is built by D8, D10, and D128. The Proton donor role is filled by D10. An imidazoleglycerol-phosphate dehydratase region spans residues 169 to 375 (RRAVVQRHTK…HVLPSTKGAL (207 aa)).

The protein in the N-terminal section; belongs to the histidinol-phosphatase family. In the C-terminal section; belongs to the imidazoleglycerol-phosphate dehydratase family. Mg(2+) serves as cofactor.

Its subcellular location is the cytoplasm. It catalyses the reaction D-erythro-1-(imidazol-4-yl)glycerol 3-phosphate = 3-(imidazol-4-yl)-2-oxopropyl phosphate + H2O. The catalysed reaction is L-histidinol phosphate + H2O = L-histidinol + phosphate. It functions in the pathway amino-acid biosynthesis; L-histidine biosynthesis; L-histidine from 5-phospho-alpha-D-ribose 1-diphosphate: step 6/9. Its pathway is amino-acid biosynthesis; L-histidine biosynthesis; L-histidine from 5-phospho-alpha-D-ribose 1-diphosphate: step 8/9. This is Histidine biosynthesis bifunctional protein HisB from Xylella fastidiosa (strain Temecula1 / ATCC 700964).